A 78-amino-acid chain; its full sequence is D-alanyl carrier protein (78 aa).

Residues 1–78 (MAFRENVLEI…MIITQLEALK (78 aa)) enclose the Carrier domain. At Ser-36 the chain carries O-(pantetheine 4'-phosphoryl)serine.

The protein belongs to the DltC family. 4'-phosphopantetheine is transferred from CoA to a specific serine of apo-DCP.

It is found in the cytoplasm. Its pathway is cell wall biogenesis; lipoteichoic acid biosynthesis. In terms of biological role, carrier protein involved in the D-alanylation of lipoteichoic acid (LTA). The loading of thioester-linked D-alanine onto DltC is catalyzed by D-alanine--D-alanyl carrier protein ligase DltA. The DltC-carried D-alanyl group is further transferred to cell membrane phosphatidylglycerol (PG) by forming an ester bond, probably catalyzed by DltD. D-alanylation of LTA plays an important role in modulating the properties of the cell wall in Gram-positive bacteria, influencing the net charge of the cell wall. The protein is D-alanyl carrier protein of Listeria monocytogenes serotype 4b (strain CLIP80459).